Consider the following 285-residue polypeptide: Sulfotransferase 2A2 (285 aa).

Residues lysine 44, serine 45, glycine 46, threonine 47, asparagine 48, and tryptophan 49 each coordinate 3'-phosphoadenylyl sulfate. Histidine 99 serves as the catalytic Proton acceptor. Residues arginine 121, serine 129, tyrosine 184, serine 218, arginine 247, lysine 248, and glycine 249 each contribute to the 3'-phosphoadenylyl sulfate site.

Belongs to the sulfotransferase 1 family. In terms of tissue distribution, detected in liver.

It localises to the cytoplasm. The catalysed reaction is an alcohol + 3'-phosphoadenylyl sulfate = an alkyl sulfate + adenosine 3',5'-bisphosphate + H(+). Functionally, sulfotransferase that utilizes 3'-phospho-5'-adenylyl sulfate (PAPS) as sulfonate donor to catalyze the sulfate conjugation of a potential wide variety of acceptor molecules bearing a hydroxyl group. Sulfonation increases the water solubility of most compounds, and therefore their renal excretion, but it can also result in bioactivation to form active metabolites. In Rattus norvegicus (Rat), this protein is Sulfotransferase 2A2.